Reading from the N-terminus, the 316-residue chain is Olfactory receptor 2AG2 (316 aa).

The Extracellular portion of the chain corresponds to 1–30 (MELRNSTLGSGFILVGILNDSGSPELLYAT). N-linked (GlcNAc...) asparagine glycans are attached at residues Asn5 and Asn19. A helical membrane pass occupies residues 31–51 (FTILYMLALTSNGLLLLAITI). Residues 52-56 (EARLH) lie on the Cytoplasmic side of the membrane. A helical transmembrane segment spans residues 57–77 (MPMYLLLGQLSLMDLLFTSVV). Residues 78-97 (TPKALADFLRRENTISFGGC) lie on the Extracellular side of the membrane. Cysteines 97 and 179 form a disulfide. A helical transmembrane segment spans residues 98 to 118 (ALQMFLALTMGSAEDLLLAFM). Residues 119–139 (AYDRYVAICHPLKYMTLMSPR) lie on the Cytoplasmic side of the membrane. Residues 140 to 160 (VCWIMVATSWILASLIAIGHT) form a helical membrane-spanning segment. At 161 to 205 (MYTMHLPFCVSWEIRHLLCEIPPLLKLACADTSRYELIIYVTGVT) the chain is on the extracellular side. Residues 206–226 (FLLLPISAIVASYTLVLFTVL) traverse the membrane as a helical segment. Over 227–244 (RMPSNEGRKKALVTCSSH) the chain is Cytoplasmic. The chain crosses the membrane as a helical span at residues 245-265 (LIVVGMFYGAATFMYVLPSSF). Over 266–271 (HSPKQD) the chain is Extracellular. The chain crosses the membrane as a helical span at residues 272–292 (NIISVFYTIVTPALNPLIYSL). Over 293–316 (RNKEVMRALRRVLGKYILLAHSTL) the chain is Cytoplasmic.

The protein belongs to the G-protein coupled receptor 1 family.

The protein localises to the cell membrane. In terms of biological role, odorant receptor. The chain is Olfactory receptor 2AG2 (OR2AG2) from Homo sapiens (Human).